The chain runs to 912 residues: Probable dipeptidyl-aminopeptidase B (912 aa).

The span at 1 to 25 (MAAEKGESSDEERKPLTRDSMEYRD) shows a compositional bias: basic and acidic residues. Disordered stretches follow at residues 1–31 (MAAE…NSLH) and 49–70 (GSTH…SDDG). At 1-92 (MAAEKGESSD…GGKPVQKKVK (92 aa)) the chain is on the cytoplasmic side. The helical; Signal-anchor for type II membrane protein transmembrane segment at 93–113 (IVLGFLLFLCLSGWSLSFVLF) threads the bilayer. Residues 114–912 (LFGGHESSKT…RAAIWVGLSI (799 aa)) are Vacuolar-facing. 5 N-linked (GlcNAc...) asparagine glycosylation sites follow: N130, N210, N346, N569, and N656. S751 (charge relay system) is an active-site residue. N-linked (GlcNAc...) asparagine glycosylation is present at N810. Catalysis depends on charge relay system residues D828 and H861. N-linked (GlcNAc...) asparagine glycosylation occurs at N897.

The protein belongs to the peptidase S9B family.

The protein localises to the vacuole membrane. It catalyses the reaction Release of an N-terminal dipeptide, Xaa-Yaa-|-Zaa-, from a polypeptide, preferentially when Yaa is Pro, provided Zaa is neither Pro nor hydroxyproline.. Type IV dipeptidyl-peptidase which removes N-terminal dipeptides sequentially from polypeptides having unsubstituted N-termini provided that the penultimate residue is proline. This is Probable dipeptidyl-aminopeptidase B (DAPB) from Paracoccidioides lutzii (strain ATCC MYA-826 / Pb01) (Paracoccidioides brasiliensis).